The sequence spans 54 residues: Large ribosomal subunit protein eL37 (54 aa).

The Zn(2+) site is built by cysteine 20, cysteine 23, cysteine 35, and cysteine 38. The segment at 20 to 38 (CRRCGHHTYNVRTKRCSHC) adopts a C4-type zinc-finger fold.

The protein belongs to the eukaryotic ribosomal protein eL37 family. Zn(2+) is required as a cofactor.

In terms of biological role, binds to the 23S rRNA. This Thermoplasma volcanium (strain ATCC 51530 / DSM 4299 / JCM 9571 / NBRC 15438 / GSS1) protein is Large ribosomal subunit protein eL37 (rpl37e).